We begin with the raw amino-acid sequence, 1064 residues long: Serine/threonine protein kinase KIN1 (1064 aa).

Positions 1–113 (MDDYHVNTAF…SSQGMPKQFH (113 aa)) are disordered. The segment covering 8-36 (TAFSMGRGNQQDDGNSESNSMHTQPSTMA) has biased composition (polar residues). Basic and acidic residues predominate over residues 74–91 (AEQKERQVELEGKSRENA). Over residues 93 to 108 (KPNTTSQSRVSSSQGM) the composition is skewed to polar residues. The Protein kinase domain maps to 120 to 398 (WEFVETVGAG…LKQVVEHHWM (279 aa)). ATP-binding positions include 126-134 (VGAGSMGKV) and lysine 149. Aspartate 269 (proton acceptor) is an active-site residue. Residue serine 534 is modified to Phosphoserine. The segment at 549-621 (SEPEATLATK…SPTPQGNDYQ (73 aa)) is disordered. A compositionally biased stretch (polar residues) spans 557–571 (TKDTSVPFTPKNSDG). The residue at position 593 (serine 593) is a Phosphoserine. The segment covering 598 to 608 (KSSDNQRREME) has biased composition (basic and acidic residues). At serine 646 the chain carries Phosphoserine. Disordered regions lie at residues 652–672 (TIEQ…QKTH), 694–714 (MNEP…FPAL), 762–797 (EGSD…HARR), 823–843 (LESS…QTND), and 958–1016 (HESI…GMTT). Over residues 654–670 (EQTSVNSNNSINKPVQK) the composition is skewed to polar residues. Serine 764 bears the Phosphoserine mark. Residues 779 to 794 (KGRKLHPSARAKSVGH) show a composition bias toward basic residues. Composition is skewed to polar residues over residues 832 to 843 (DSLGNVTSQTND), 963 to 989 (RQGS…SITE), and 998 to 1016 (GTSL…GMTT). Serine 986 is modified (phosphoserine). The KA1 domain maps to 1015 to 1064 (TTTEKEPIKFEIHIVKVRIVGLAGVHFKKISGNTWLYKELASSILKELKL).

It belongs to the protein kinase superfamily. CAMK Ser/Thr protein kinase family. NIM1 subfamily. Interacts with SEC9 and SRO7. In terms of processing, autophosphorylated.

It localises to the cytoplasm. It is found in the cell membrane. It catalyses the reaction L-seryl-[protein] + ATP = O-phospho-L-seryl-[protein] + ADP + H(+). The enzyme catalyses L-threonyl-[protein] + ATP = O-phospho-L-threonyl-[protein] + ADP + H(+). In terms of biological role, serine/threonine protein kinase involved in the regulation of exocytosis. Induces phosphorylation of SEC9 and its release from the plasma membrane to the cytosol. The chain is Serine/threonine protein kinase KIN1 (KIN1) from Saccharomyces cerevisiae (strain ATCC 204508 / S288c) (Baker's yeast).